A 425-amino-acid chain; its full sequence is UDP-N-acetylglucosamine 1-carboxyvinyltransferase (425 aa).

A phosphoenolpyruvate-binding site is contributed by 22 to 23 (KN). Residue Arg-98 participates in UDP-N-acetyl-alpha-D-glucosamine binding. Catalysis depends on Cys-122, which acts as the Proton donor. Cys-122 is modified (2-(S-cysteinyl)pyruvic acid O-phosphothioketal). UDP-N-acetyl-alpha-D-glucosamine contacts are provided by residues 127–131 (RPVDQ), Asp-313, and Ile-335.

Belongs to the EPSP synthase family. MurA subfamily.

The protein localises to the cytoplasm. It catalyses the reaction phosphoenolpyruvate + UDP-N-acetyl-alpha-D-glucosamine = UDP-N-acetyl-3-O-(1-carboxyvinyl)-alpha-D-glucosamine + phosphate. It functions in the pathway cell wall biogenesis; peptidoglycan biosynthesis. Functionally, cell wall formation. Adds enolpyruvyl to UDP-N-acetylglucosamine. The chain is UDP-N-acetylglucosamine 1-carboxyvinyltransferase from Xylella fastidiosa (strain M12).